The following is a 386-amino-acid chain: ADP,ATP carrier protein, mitochondrial (386 aa).

The transit peptide at 1 to 77 directs the protein to the mitochondrion; sequence MADMNQHPTV…SNASPVFVQA (77 aa). Solcar repeat units follow at residues 84-177, 189-281, and 289-375; these read AAFA…FKRL, KWFA…LKPV, and DSFF…LQVL. A run of 5 helical transmembrane segments spans residues 86-113, 154-178, 187-207, 257-278, and 292-312; these read FATDFLMGGVSAAVSKTAAAPIERVKLL, TANVIRYFPTQALNFAFKDYFKRLF, YWKWFAGNLASGGAAGASSLF, FNISCVGIIVYRGLYFGMYDSL, and FASFGLGWLITNGAGLASYPI. Positions 159 and 171 each coordinate ADP. An ADP-binding site is contributed by Arg-316. Residues 316–321 form an important for transport activity region; that stretch reads RRRMMM. Positions 316 to 321 match the Nucleotide carrier signature motif motif; the sequence is RRRMMM. The chain crosses the membrane as a helical span at residues 352 to 372; it reads AGANILRAVAGAGVLAGYDKL.

It belongs to the mitochondrial carrier (TC 2.A.29) family. Monomer.

Its subcellular location is the mitochondrion inner membrane. It catalyses the reaction ADP(in) + ATP(out) = ADP(out) + ATP(in). With respect to regulation, the matrix-open state (m-state) is inhibited by the membrane-permeable bongkrekic acid (BKA). The cytoplasmic-open state (c-state) is inhibited by the membrane-impermeable toxic inhibitor carboxyatractyloside (CATR). Its function is as follows. ADP:ATP antiporter that mediates import of ADP into the mitochondrial matrix for ATP synthesis, and export of ATP out to fuel the cell. Cycles between the cytoplasmic-open state (c-state) and the matrix-open state (m-state): operates by the alternating access mechanism with a single substrate-binding site intermittently exposed to either the cytosolic (c-state) or matrix (m-state) side of the inner mitochondrial membrane. The chain is ADP,ATP carrier protein, mitochondrial (ANT) from Solanum tuberosum (Potato).